The following is a 114-amino-acid chain: Pole-localizer protein TmaR (114 aa).

A coiled-coil region spans residues 70 to 111; it reads RDDYESRVDDYTIRNAELSKQRREASTKMKEQKKAHAELLKN. The tract at residues 89-114 is disordered; it reads KQRREASTKMKEQKKAHAELLKNAEK.

The protein belongs to the pole-localizer TmaR family.

Its subcellular location is the cytoplasm. Pole-localizer protein involved in the regulation of several cellular processes. This chain is Pole-localizer protein TmaR, found in Haemophilus influenzae (strain PittEE).